The sequence spans 342 residues: Phosphoribosylformylglycinamidine cyclo-ligase (342 aa).

This sequence belongs to the AIR synthase family.

The protein resides in the cytoplasm. The enzyme catalyses 2-formamido-N(1)-(5-O-phospho-beta-D-ribosyl)acetamidine + ATP = 5-amino-1-(5-phospho-beta-D-ribosyl)imidazole + ADP + phosphate + H(+). It participates in purine metabolism; IMP biosynthesis via de novo pathway; 5-amino-1-(5-phospho-D-ribosyl)imidazole from N(2)-formyl-N(1)-(5-phospho-D-ribosyl)glycinamide: step 2/2. The chain is Phosphoribosylformylglycinamidine cyclo-ligase from Staphylococcus aureus (strain Mu3 / ATCC 700698).